A 183-amino-acid chain; its full sequence is Translocon-associated protein subunit beta (183 aa).

Positions 1–17 (MRLLAVVVLALLAVSQA) are cleaved as a signal peptide. Over 18–146 (EEGARLLASK…REFDRRFSPH (129 aa)) the chain is Lumenal. Asparagine 88 carries N-linked (GlcNAc...) (high mannose) asparagine glycosylation. Asparagine 104 carries an N-linked (GlcNAc...) asparagine glycan. The helical transmembrane segment at 147–167 (FLDWAAFGVMTLPSIGIPLLL) threads the bilayer. The Cytoplasmic segment spans residues 168–183 (WYSSKRKYDTPKPKKN).

This sequence belongs to the TRAP-beta family. Heterotetramer of TRAP-alpha, TRAP-beta, TRAP-delta and TRAP-gamma. Interacts with STING1.

Its subcellular location is the endoplasmic reticulum membrane. Its function is as follows. TRAP proteins are part of a complex whose function is to bind calcium to the ER membrane and thereby regulate the retention of ER resident proteins. The sequence is that of Translocon-associated protein subunit beta (Ssr2) from Mus musculus (Mouse).